Here is a 608-residue protein sequence, read N- to C-terminus: Chaperone protein HtpG (608 aa).

Residues 1–332 (MQFQTEVNQL…VEDLPLNVSR (332 aa)) are a; substrate-binding. A b region spans residues 333–536 (EILQENQILK…KNKPDFAMQQ (204 aa)). Residues 537-608 (LLKQMGQEQN…LTKIINKAFS (72 aa)) are c.

It belongs to the heat shock protein 90 family. In terms of assembly, homodimer.

It is found in the cytoplasm. Its function is as follows. Molecular chaperone. Has ATPase activity. The polypeptide is Chaperone protein HtpG (Campylobacter jejuni subsp. jejuni serotype O:23/36 (strain 81-176)).